The sequence spans 202 residues: Recoverin (202 aa).

G2 carries N-myristoyl glycine lipidation. C39 bears the Cysteine sulfenic acid (-SOH) mark. EF-hand domains lie at 41–59 (SGRI…FFPD), 61–96 (DPKA…TTAG), 97–132 (KPTQ…IFKM), and 147–182 (TPEK…NKEI). Ca(2+)-binding residues include D74, N76, D78, T80, E85, D110, D112, N114, T116, and E121. The segment at 189-192 (EPQK) is interaction with GRK1.

It belongs to the recoverin family. As to quaternary structure, homodimer; disulfide-linked. Homodimerization is caused by prolonged intense illumination. May form a complex composed of RHO, GRK1 and RCVRN in a Ca(2+)-dependent manner; RCVRN prevents the interaction between GRK1 and RHO. Interacts (via C-terminus) with GRK1 (via N-terminus); the interaction is Ca(2+)-dependent. Post-translationally, the N-terminal glycine is linked to one of four different types of acyl groups. The most abundant is myristoleate (14:1), but 14:0, 14:2, and 12:0 acyl residues are also present. The Ca(2+) induced exposure of the myristoyl group, known as the calcium-myristoyl switch, promotes RCVRN binding to the photoreceptor cell membranes only when intracellular Ca(2+) concentration is high. Oxidation on Cys-39 occurs in response to prolonged intense illumination and results in the formation of disulfide homodimers, and to a lesser extent disulfide-linked heterodimers. As to expression, expressed in rod photoreceptors in the retina (at protein level).

Its subcellular location is the photoreceptor inner segment. The protein resides in the cell projection. It localises to the cilium. The protein localises to the photoreceptor outer segment. It is found in the photoreceptor outer segment membrane. Its subcellular location is the perikaryon. Its function is as follows. Acts as a calcium sensor and regulates phototransduction of cone and rod photoreceptor cells. Modulates light sensitivity of cone photoreceptor in dark and dim conditions. In response to high Ca(2+) levels induced by low light levels, prolongs RHO/rhodopsin activation in rod photoreceptor cells by binding to and inhibiting GRK1-mediated phosphorylation of RHO/rhodopsin. Plays a role in scotopic vision/enhances vision in dim light by enhancing signal transfer between rod photoreceptors and rod bipolar cells. Improves rod photoreceptor sensitivity in dim light and mediates response of rod photoreceptors to facilitate detection of change and motion in bright light. This Mus musculus (Mouse) protein is Recoverin (Rcvrn).